A 172-amino-acid polypeptide reads, in one-letter code: Large ribosomal subunit protein uL10 (172 aa).

It belongs to the universal ribosomal protein uL10 family. Part of the ribosomal stalk of the 50S ribosomal subunit. The N-terminus interacts with L11 and the large rRNA to form the base of the stalk. The C-terminus forms an elongated spine to which L12 dimers bind in a sequential fashion forming a multimeric L10(L12)X complex.

Forms part of the ribosomal stalk, playing a central role in the interaction of the ribosome with GTP-bound translation factors. This chain is Large ribosomal subunit protein uL10, found in Francisella tularensis subsp. mediasiatica (strain FSC147).